The primary structure comprises 324 residues: tRNA pseudouridine synthase B (324 aa).

Asp49 acts as the Nucleophile in catalysis. The disordered stretch occupies residues 87 to 107; the sequence is RSTDDLEGQPTKTSDKRPSRE.

This sequence belongs to the pseudouridine synthase TruB family. Type 1 subfamily.

It catalyses the reaction uridine(55) in tRNA = pseudouridine(55) in tRNA. Its function is as follows. Responsible for synthesis of pseudouridine from uracil-55 in the psi GC loop of transfer RNAs. This is tRNA pseudouridine synthase B from Brucella melitensis biotype 1 (strain ATCC 23456 / CCUG 17765 / NCTC 10094 / 16M).